The following is a 910-amino-acid chain: Triacylglycerol lipase 4 (910 aa).

The segment covering 51–66 (SKDNSDVERVEEDAGK) has biased composition (basic and acidic residues). Positions 51-120 (SKDNSDVERV…TDEGEDERQG (70 aa)) are disordered. Residue serine 55 is modified to Phosphoserine. Over residues 70-85 (TGKNKTTNKVNFNLDT) the composition is skewed to polar residues. Acidic residues predominate over residues 90–116 (KLDDDQETVTENENNDIEMVETDEGED). The PNPLA domain occupies 282–483 (LVLSGGGTFG…DNDLPISRLS (202 aa)). A GXGXXG motif is present at residues 286–291 (GGGTFG). A GXSXG motif is present at residues 313-317 (GSSAG). Serine 315 (nucleophile) is an active-site residue. Aspartate 470 (proton acceptor) is an active-site residue. Disordered regions lie at residues 657–683 (EQTS…DNHI) and 713–777 (SPSG…PILQ). The span at 666-683 (PENSTLLTRTPTKGDNHI) shows a compositional bias: polar residues. At threonine 675 the chain carries Phosphothreonine; by Cdk1. Phosphoserine is present on residues serine 737, serine 749, serine 751, and serine 836. The span at 739–768 (TISTSRRPAKSFSFSVASPTSRMLRQSSKI) shows a compositional bias: polar residues. The segment at 874–910 (RRHSIDGRPPSQATKSSPFRSRPSSSTQHKSTTSFTQ) is disordered. The segment covering 889–899 (SSPFRSRPSSS) has biased composition (low complexity). Serine 890 is modified (phosphoserine; by Cdk1). Polar residues predominate over residues 900-910 (TQHKSTTSFTQ).

Phosphorylation at Thr-675 and Ser-890 by Cdk1/CDC28 stimulates enzyme activity in vivo.

It is found in the lipid droplet. It catalyses the reaction a triacylglycerol + H2O = a diacylglycerol + a fatty acid + H(+). It carries out the reaction 1,2,3-tri-(9Z-octadecenoyl)-glycerol + H2O = di-(9Z)-octadecenoylglycerol + (9Z)-octadecenoate + H(+). The enzyme catalyses 1,2-dihexadecanoyl-sn-glycero-3-phosphocholine + H2O = 1-hexadecanoyl-sn-glycero-3-phosphocholine + hexadecanoate + H(+). The catalysed reaction is cholesteryl (9Z-octadecenoate) + H2O = cholesterol + (9Z)-octadecenoate + H(+). It catalyses the reaction 1-(9Z-octadecenoyl)-sn-glycero-3-phosphate + (9Z)-octadecenoyl-CoA = 1,2-di-(9Z-octadecenoyl)-sn-glycero-3-phosphate + CoA. Its activity is regulated as follows. Phosphorylated and activated by cyclin-dependent kinase 1 (Cdk1/CDC28). Loses its lipolytic activity in cells lacking nonpolar lipids, but retains its side activity as lysophospholipid acyltransferase. Functionally, lipid particle-localized triacylglycerol (TAG) lipase. The lipid droplet/particle is a lipid storage compartment which serves as a depot of energy and building blocks for membrane lipid biosynthesis. Involved in the mobilization of the non-polar storage lipids triacylglycerols (TAGs) from lipid particles by hydrolysis of TAGs, releasing and supplying specific fatty acids to the appropriate metabolic pathways. Also has steryl ester (SE) hydrolase and phospholipase A(2) (PLA(2)) activities, and catalyzes the acylation of lysophosphatidic acid (LPA). Contributes to early bud formation in late G1 phase of the cell cycle upon phosphorylation and activation by cyclin-dependent kinase 1 (Cdk1/CDC28). This chain is Triacylglycerol lipase 4 (TGL4), found in Saccharomyces cerevisiae (strain ATCC 204508 / S288c) (Baker's yeast).